Consider the following 1404-residue polypeptide: DNA-directed RNA polymerase subunit beta' (1404 aa).

The Zn(2+) site is built by Cys70, Cys72, Cys85, and Cys88. 3 residues coordinate Mg(2+): Asp460, Asp462, and Asp464. Cys814, Cys888, Cys895, and Cys898 together coordinate Zn(2+).

The protein belongs to the RNA polymerase beta' chain family. As to quaternary structure, the RNAP catalytic core consists of 2 alpha, 1 beta, 1 beta' and 1 omega subunit. When a sigma factor is associated with the core the holoenzyme is formed, which can initiate transcription. Requires Mg(2+) as cofactor. Zn(2+) serves as cofactor.

It catalyses the reaction RNA(n) + a ribonucleoside 5'-triphosphate = RNA(n+1) + diphosphate. Its function is as follows. DNA-dependent RNA polymerase catalyzes the transcription of DNA into RNA using the four ribonucleoside triphosphates as substrates. This Shewanella halifaxensis (strain HAW-EB4) protein is DNA-directed RNA polymerase subunit beta'.